Here is a 303-residue protein sequence, read N- to C-terminus: MMSIDITTNHKIIFGDARKMDEIEDESVHLVVTSPPYPMIEMWDELFKMLNLEINKRWMEMENEEDEEKKEKLIMQIYNLMHQTLYPVWEEVYRVLVPGGIACINIGDATRKINGVFRLFPNHSKIIENFEKIGFVTLPYILWKKPSNKPNAFLGSGFLPPNAYVTLDVEYILIFRKGKPRKFKPKDPLRYASAYTKEERDRWFSQIWEIVGDKQTHPKIERRTASFPEEIPRRLIRMFSIIGDTVLDPFLGTGTTVKAAIELKRNSIGYEIDKSLKPIIEEKIGIKQKRIGMDFNVEFINRG.

It belongs to the N(4)/N(6)-methyltransferase family. N(4) subfamily.

The catalysed reaction is a 2'-deoxycytidine in DNA + S-adenosyl-L-methionine = an N(4)-methyl-2'-deoxycytidine in DNA + S-adenosyl-L-homocysteine + H(+). Its function is as follows. A beta subtype methylase that recognizes the double-stranded sequence 5'-CTAG-3', methylates C-1 on both strands, and protects the DNA from cleavage by the MjaI endonuclease. This Methanocaldococcus jannaschii (strain ATCC 43067 / DSM 2661 / JAL-1 / JCM 10045 / NBRC 100440) (Methanococcus jannaschii) protein is Type II methyltransferase M.MjaI (mjaIM).